Consider the following 326-residue polypeptide: B3 domain-containing protein At5g60130 (326 aa).

Residues 12 to 110 (PKFFKVYLPD…CFHFCIYEHR (99 aa)) constitute a DNA-binding region (TF-B3). A disordered region spans residues 124–222 (EEIKVESDSD…DEDERQYLDD (99 aa)). Over residues 143–199 (LSLDEDDDDSDYNCGEDNDSDDYADEAAVEKDDNDADDEDVDNVADDVPVEDDDYVE) the composition is skewed to acidic residues.

Its subcellular location is the nucleus. This Arabidopsis thaliana (Mouse-ear cress) protein is B3 domain-containing protein At5g60130.